The following is a 288-amino-acid chain: Methyltransferase ucsB (288 aa).

S-adenosyl-L-methionine-binding positions include aspartate 87 and 121 to 122 (DA).

This sequence belongs to the class I-like SAM-binding methyltransferase superfamily.

Its pathway is mycotoxin biosynthesis. Its function is as follows. Methyltransferase; part of the gene cluster that mediates the biosynthesis of UCS1025A, a member of the pyrrolizidinone family that acts as a strong telomerase inhibitor and displays potent antibacterial and antitumor properties. These compounds share a hemiaminal-containing pyrrolizidinone core fused with a gamma-lactone, giving a furopyrrolizidine that is connected to a decalin fragment. The polyketide synthase module (PKS) of the PKS-NRPS ucsA is responsible for the synthesis of the polyketide backbone via the condensation of an acetyl-CoA starter unit with 6 malonyl-CoA units. The downstream nonribosomal peptide synthetase (NRPS) module then amidates the carboxyl end of the polyketide with a 2S,3S-methylproline derived from L-isoleucine by the 2-oxoglutarate-dependent dioxygenase ucsF which converts L-isoleucine to (4S,5S)-4-methylpyrroline-5-carboxylate that is further converted to 2S,3S-methylproline by the pyrroline-5-carboxylate reductase ucsG. Reductive release of the completed aminoacyl polyketide from the assembly line can form the 3-pyrrolin-2-one structure via an intramolecular Knoevenagel reaction. Because ucsA lacks a designated enoylreductase (ER) domain, the required activity is provided the enoyl reductase ucsL. This keto acyclic precursor is the substrate of the Diels-Alderase ucsH, that catalyzes the Diels-Alder cycloaddition. Oxidation of the 3S-methyl group to a carboxylate by the cytochrome P450 monooxygenase ucsK allows an oxa-Michael cyclization that might involve the reductase/dehydrogenase ucsI and which furnishes the furopyrrolizidine. The oxidase ucsJ likely plays a critical role in stereoselective reduction of the C5-C6 double bond to afford the required R-configured carboxylate group. Further enolization and oxidation at C5 by an unidentified enzyme affords the last intermediate that can undergo oxa-Michael cyclization to yield UCS1025A. The protein is Methyltransferase ucsB of Acremonium sp.